Reading from the N-terminus, the 187-residue chain is Peptide deformylase (187 aa).

Residues Cys-107 and His-149 each coordinate Fe cation. Glu-150 is an active-site residue. A Fe cation-binding site is contributed by His-153.

It belongs to the polypeptide deformylase family. Requires Fe(2+) as cofactor.

The catalysed reaction is N-terminal N-formyl-L-methionyl-[peptide] + H2O = N-terminal L-methionyl-[peptide] + formate. Functionally, removes the formyl group from the N-terminal Met of newly synthesized proteins. Requires at least a dipeptide for an efficient rate of reaction. N-terminal L-methionine is a prerequisite for activity but the enzyme has broad specificity at other positions. The chain is Peptide deformylase from Synechocystis sp. (strain ATCC 27184 / PCC 6803 / Kazusa).